Here is a 353-residue protein sequence, read N- to C-terminus: tRNA-specific 2-thiouridylase MnmA 2 (353 aa).

6 to 13 serves as a coordination point for ATP; that stretch reads LLSGGVDS. The interval 92 to 94 is interaction with target base in tRNA; the sequence is NPD. The Nucleophile role is filled by Cys-97. Cys-97 and Cys-192 form a disulfide bridge. Gly-120 is an ATP binding site. The segment at 142–144 is interaction with tRNA; the sequence is KDQ. The active-site Cysteine persulfide intermediate is Cys-192.

The protein belongs to the MnmA/TRMU family.

Its subcellular location is the cytoplasm. The catalysed reaction is S-sulfanyl-L-cysteinyl-[protein] + uridine(34) in tRNA + AH2 + ATP = 2-thiouridine(34) in tRNA + L-cysteinyl-[protein] + A + AMP + diphosphate + H(+). Catalyzes the 2-thiolation of uridine at the wobble position (U34) of tRNA, leading to the formation of s(2)U34. This is tRNA-specific 2-thiouridylase MnmA 2 from Bacteroides fragilis (strain ATCC 25285 / DSM 2151 / CCUG 4856 / JCM 11019 / LMG 10263 / NCTC 9343 / Onslow / VPI 2553 / EN-2).